We begin with the raw amino-acid sequence, 339 residues long: Glucokinase (339 aa).

16 to 21 (GDIGGT) serves as a coordination point for ATP.

The protein belongs to the bacterial glucokinase family.

The protein resides in the cytoplasm. It carries out the reaction D-glucose + ATP = D-glucose 6-phosphate + ADP + H(+). In Rhizobium meliloti (strain 1021) (Ensifer meliloti), this protein is Glucokinase.